The primary structure comprises 325 residues: Small ribosomal subunit protein uS4m (325 aa).

Residues 146–209 (KRIDMILLRS…HKQNLIHRLK (64 aa)) enclose the S4 RNA-binding domain.

The protein belongs to the universal ribosomal protein uS4 family.

Its subcellular location is the mitochondrion. This is Small ribosomal subunit protein uS4m (mrps4) from Dictyostelium citrinum (Slime mold).